The following is a 504-amino-acid chain: Maturase K (504 aa).

Belongs to the intron maturase 2 family. MatK subfamily.

The protein localises to the plastid. It is found in the chloroplast. In terms of biological role, usually encoded in the trnK tRNA gene intron. Probably assists in splicing its own and other chloroplast group II introns. The sequence is that of Maturase K from Quercus coccifera (Kermes oak).